A 233-amino-acid polypeptide reads, in one-letter code: Glucosamine-6-phosphate deaminase (233 aa).

Asp-62 (proton acceptor; for enolization step) is an active-site residue. Asn-128 serves as the catalytic For ring-opening step. The active-site Proton acceptor; for ring-opening step is His-130. Catalysis depends on Glu-135, which acts as the For ring-opening step.

The protein belongs to the glucosamine/galactosamine-6-phosphate isomerase family. NagB subfamily.

The enzyme catalyses alpha-D-glucosamine 6-phosphate + H2O = beta-D-fructose 6-phosphate + NH4(+). Its pathway is amino-sugar metabolism; N-acetylneuraminate degradation; D-fructose 6-phosphate from N-acetylneuraminate: step 5/5. Its function is as follows. Catalyzes the reversible isomerization-deamination of glucosamine 6-phosphate (GlcN6P) to form fructose 6-phosphate (Fru6P) and ammonium ion. In Enterococcus faecalis (strain ATCC 700802 / V583), this protein is Glucosamine-6-phosphate deaminase.